The chain runs to 152 residues: Snaclec 5 (152 aa).

The signal sequence occupies residues 1-23; that stretch reads MGRFIFLSSGLLVVFLSLSGTGA. 3 disulfide bridges follow: C27/C38, C55/C148, and C123/C140. The C-type lectin domain maps to 34-149; sequence YGQHCYRAFK…CASHNPFVCK (116 aa).

Belongs to the snaclec family. Heterodimer; disulfide-linked. As to expression, expressed by the venom gland.

It localises to the secreted. In terms of biological role, interferes with one step of hemostasis (modulation of platelet aggregation, or coagulation cascade, for example). The chain is Snaclec 5 from Bitis arietans (African puff adder).